Here is a 156-residue protein sequence, read N- to C-terminus: Small ribosomal subunit protein uS7 (156 aa).

It belongs to the universal ribosomal protein uS7 family. In terms of assembly, part of the 30S ribosomal subunit. Contacts proteins S9 and S11.

In terms of biological role, one of the primary rRNA binding proteins, it binds directly to 16S rRNA where it nucleates assembly of the head domain of the 30S subunit. Is located at the subunit interface close to the decoding center, probably blocks exit of the E-site tRNA. The protein is Small ribosomal subunit protein uS7 of Bartonella henselae (strain ATCC 49882 / DSM 28221 / CCUG 30454 / Houston 1) (Rochalimaea henselae).